A 362-amino-acid polypeptide reads, in one-letter code: Biotin synthase (362 aa).

The tract at residues 14 to 39 (AQRTPEPLPPTSQGLARPSHDVVRGP) is disordered. Residues 87 to 316 (HKGGPAALCG…ARDILVCGGR (230 aa)) form the Radical SAM core domain. [4Fe-4S] cluster-binding residues include Cys-105, Cys-109, and Cys-112. The [2Fe-2S] cluster site is built by Cys-181 and Cys-241.

The protein belongs to the radical SAM superfamily. Biotin synthase family. As to quaternary structure, homodimer. The cofactor is [4Fe-4S] cluster. Requires [2Fe-2S] cluster as cofactor.

The catalysed reaction is (4R,5S)-dethiobiotin + (sulfur carrier)-SH + 2 reduced [2Fe-2S]-[ferredoxin] + 2 S-adenosyl-L-methionine = (sulfur carrier)-H + biotin + 2 5'-deoxyadenosine + 2 L-methionine + 2 oxidized [2Fe-2S]-[ferredoxin]. Its pathway is cofactor biosynthesis; biotin biosynthesis; biotin from 7,8-diaminononanoate: step 2/2. Catalyzes the conversion of dethiobiotin (DTB) to biotin by the insertion of a sulfur atom into dethiobiotin via a radical-based mechanism. This is Biotin synthase from Nitratidesulfovibrio vulgaris (strain ATCC 29579 / DSM 644 / CCUG 34227 / NCIMB 8303 / VKM B-1760 / Hildenborough) (Desulfovibrio vulgaris).